A 271-amino-acid polypeptide reads, in one-letter code: MKI67 FHA domain-interacting nucleolar phosphoprotein (271 aa).

The tract at residues 1–20 is disordered; it reads MAEYSGPAKPTLALNPREDS. The residue at position 2 (alanine 2) is an N-acetylalanine. A Glycyl lysine isopeptide (Lys-Gly) (interchain with G-Cter in SUMO2) cross-link involves residue lysine 37. The RRM domain occupies 44 to 122; it reads GVVYLGHLPS…RLLSCKFMPR (79 aa). An Omega-N-methylarginine modification is found at arginine 113. Glycyl lysine isopeptide (Lys-Gly) (interchain with G-Cter in SUMO2) cross-links involve residues lysine 178 and lysine 191. Phosphothreonine occurs at positions 213 and 217. Residues arginine 223 and arginine 224 each carry the omega-N-methylated arginine modification. Serine 226 carries the post-translational modification Phosphoserine. A disordered region spans residues 242–271; it reads PVSPVKEDTQKTPAPESSGKKRLRKRKSKQ. Lysine 247 is covalently cross-linked (Glycyl lysine isopeptide (Lys-Gly) (interchain with G-Cter in SUMO1); alternate). Lysine 247 is covalently cross-linked (Glycyl lysine isopeptide (Lys-Gly) (interchain with G-Cter in SUMO2); alternate). The segment covering 261-271 has biased composition (basic residues); that stretch reads KKRLRKRKSKQ.

Binds to the FHA domain of MKI67; this interaction is enhanced in mitosis. Post-translationally, phosphorylated.

Its subcellular location is the nucleus. The protein resides in the nucleolus. It is found in the chromosome. The sequence is that of MKI67 FHA domain-interacting nucleolar phosphoprotein (Nifk) from Rattus norvegicus (Rat).